Here is a 338-residue protein sequence, read N- to C-terminus: Large ribosomal subunit protein uL10 (338 aa).

The segment covering 309–327 (KAEVEEAKEEEKEEKKEEA) has biased composition (basic and acidic residues). Positions 309–338 (KAEVEEAKEEEKEEKKEEAAPAAAGLGLLF) are disordered.

The protein belongs to the universal ribosomal protein uL10 family. Part of the 50S ribosomal subunit. Forms part of the ribosomal stalk which helps the ribosome interact with GTP-bound translation factors. Forms a heptameric L10(L12)2(L12)2(L12)2 complex, where L10 forms an elongated spine to which the L12 dimers bind in a sequential fashion.

Forms part of the ribosomal stalk, playing a central role in the interaction of the ribosome with GTP-bound translation factors. This Methanothermococcus thermolithotrophicus (Methanococcus thermolithotrophicus) protein is Large ribosomal subunit protein uL10.